A 222-amino-acid chain; its full sequence is Deoxyribose-phosphate aldolase (222 aa).

Aspartate 91 (proton donor/acceptor) is an active-site residue. Catalysis depends on lysine 153, which acts as the Schiff-base intermediate with acetaldehyde. The active-site Proton donor/acceptor is the lysine 182.

This sequence belongs to the DeoC/FbaB aldolase family. DeoC type 1 subfamily.

Its subcellular location is the cytoplasm. The enzyme catalyses 2-deoxy-D-ribose 5-phosphate = D-glyceraldehyde 3-phosphate + acetaldehyde. It participates in carbohydrate degradation; 2-deoxy-D-ribose 1-phosphate degradation; D-glyceraldehyde 3-phosphate and acetaldehyde from 2-deoxy-alpha-D-ribose 1-phosphate: step 2/2. Its function is as follows. Catalyzes a reversible aldol reaction between acetaldehyde and D-glyceraldehyde 3-phosphate to generate 2-deoxy-D-ribose 5-phosphate. The chain is Deoxyribose-phosphate aldolase from Mycoplasma capricolum subsp. capricolum (strain California kid / ATCC 27343 / NCTC 10154).